The chain runs to 154 residues: Transcription antitermination protein NusB (154 aa).

The protein belongs to the NusB family.

Involved in transcription antitermination. Required for transcription of ribosomal RNA (rRNA) genes. Binds specifically to the boxA antiterminator sequence of the ribosomal RNA (rrn) operons. This Desulfosudis oleivorans (strain DSM 6200 / JCM 39069 / Hxd3) (Desulfococcus oleovorans) protein is Transcription antitermination protein NusB.